Reading from the N-terminus, the 79-residue chain is D-alanyl carrier protein (79 aa).

In terms of domain architecture, Carrier spans 1–77; the sequence is MDTKQAVLDI…KIIAKVESLR (77 aa). O-(pantetheine 4'-phosphoryl)serine is present on S35.

This sequence belongs to the DltC family. 4'-phosphopantetheine is transferred from CoA to a specific serine of apo-DCP.

The protein localises to the cytoplasm. It functions in the pathway cell wall biogenesis; lipoteichoic acid biosynthesis. Its function is as follows. Carrier protein involved in the D-alanylation of lipoteichoic acid (LTA). The loading of thioester-linked D-alanine onto DltC is catalyzed by D-alanine--D-alanyl carrier protein ligase DltA. The DltC-carried D-alanyl group is further transferred to cell membrane phosphatidylglycerol (PG) by forming an ester bond, probably catalyzed by DltD. D-alanylation of LTA plays an important role in modulating the properties of the cell wall in Gram-positive bacteria, influencing the net charge of the cell wall. This Lactobacillus johnsonii (strain CNCM I-12250 / La1 / NCC 533) protein is D-alanyl carrier protein.